The chain runs to 1460 residues: Centrosomal protein of 164 kDa (1460 aa).

Residues 1-194 are interaction with ATRIP; the sequence is MAGRPLRIGD…PSQGLKTSAY (194 aa). A WW domain is found at 56 to 89; it reads APLPGEWKPCQDITGDIYYFNFANGQSMWDHPCD. A disordered region spans residues 107–135; it reads GAIKKKKKKKEKKDKKDRDPPKSSLALGS. A compositionally biased stretch (basic residues) spans 109-119; sequence IKKKKKKKEKK. Serine 186 carries the post-translational modification Phosphoserine; by ATR and ATM. A Phosphoserine modification is found at serine 201. Disordered regions lie at residues 213–412, 440–593, and 658–719; these read GLGE…HGLD, AQQP…AALK, and EEAR…QKNR. The span at 217 to 227 shows a compositional bias: acidic residues; that stretch reads ETNEEDEEESD. The span at 256 to 270 shows a compositional bias: basic and acidic residues; it reads ESLRTSQPEEKKDVS. Residues 285 to 296 show a composition bias toward low complexity; that stretch reads SSPGADSSLSSA. 2 stretches are compositionally biased toward basic and acidic residues: residues 310–323 and 357–367; these read LPEK…EPKI and EGSRREEAAKE. The span at 453-464 shows a compositional bias: low complexity; that stretch reads QSSQDELQSKQS. Positions 465-481 are enriched in basic and acidic residues; sequence KGLEERLSPPLPHEERA. Residues 514-525 show a composition bias toward low complexity; that stretch reads SAASLSLQLSLQ. Basic and acidic residues predominate over residues 537–546; sequence EKGKEQHSQA. Serine 566 carries the phosphoserine modification. 2 stretches are compositionally biased toward basic and acidic residues: residues 658 to 668 and 686 to 719; these read EEARMREEESQ and DQIR…QKNR. Positions 1154–1206 form a coiled coil; the sequence is GIKALEDMRKNLEKETRHLDEMKSAMRKGHNLLKKKEEKLNQLESSLWEEASD. A disordered region spans residues 1290–1310; it reads PPPLLASMPAQLPPRDPKSTP. Serine 1386, serine 1388, and serine 1443 each carry phosphoserine.

In terms of assembly, interacts (via N-terminus) with ATRIP. Interacts with ATM, ATR and MDC1. Interacts with XPA (via N-terminus) upon UV irradiation. Interacts with CEP83, CCDC92, TTBK2, DVL3, NPHP3 and weakly with NPHP4. Interacts with DZIP1. In terms of processing, phosphorylation at Ser-186 is induced upon DNA-damage caused by treatment with IR irradiation, UV irradiation, hydroxyurea or amphidicolin. Also MDC1-mediated chromatin remodeling is critical for DNA damage-induced phosphorylation. As to expression, expressed in several cell lines.

The protein resides in the cytoplasm. It is found in the cytoskeleton. The protein localises to the microtubule organizing center. Its subcellular location is the centrosome. It localises to the centriole. The protein resides in the nucleus. Functionally, plays a role in microtubule organization and/or maintenance for the formation of primary cilia (PC), a microtubule-based structure that protrudes from the surface of epithelial cells. Plays a critical role in G2/M checkpoint and nuclear divisions. A key player in the DNA damage-activated ATR/ATM signaling cascade since it is required for the proper phosphorylation of H2AX, RPA, CHEK2 and CHEK1. Plays a critical role in chromosome segregation, acting as a mediator required for the maintenance of genomic stability through modulation of MDC1, RPA and CHEK1. In Homo sapiens (Human), this protein is Centrosomal protein of 164 kDa (CEP164).